A 67-amino-acid chain; its full sequence is Beta-defensin 36 (67 aa).

Residues 1-22 (MKLLLLTLAALLLVSQLTPGDA) form the signal peptide. Intrachain disulfides connect cysteine 25-cysteine 52, cysteine 32-cysteine 46, and cysteine 36-cysteine 53.

This sequence belongs to the beta-defensin family.

Its subcellular location is the secreted. Its function is as follows. Has antibacterial activity. The protein is Beta-defensin 36 (Defb36) of Mus musculus (Mouse).